We begin with the raw amino-acid sequence, 548 residues long: Chaperonin GroEL (548 aa).

ATP contacts are provided by residues 30–33 (TLGP), Lys-51, 87–91 (DGTTT), Gly-415, 479–481 (NAA), and Asp-495.

The protein belongs to the chaperonin (HSP60) family. Forms a cylinder of 14 subunits composed of two heptameric rings stacked back-to-back. Interacts with the co-chaperonin GroES.

Its subcellular location is the cytoplasm. It carries out the reaction ATP + H2O + a folded polypeptide = ADP + phosphate + an unfolded polypeptide.. Its function is as follows. Together with its co-chaperonin GroES, plays an essential role in assisting protein folding. The GroEL-GroES system forms a nano-cage that allows encapsulation of the non-native substrate proteins and provides a physical environment optimized to promote and accelerate protein folding. In Pectobacterium carotovorum subsp. carotovorum (strain PC1), this protein is Chaperonin GroEL.